Consider the following 275-residue polypeptide: Large ribosomal subunit protein uL2 (275 aa).

The segment at 223–260 (VAMNPVDHPHGGGEGRTSGGRHPVSPWGLPTKGYKTRS) is disordered.

This sequence belongs to the universal ribosomal protein uL2 family. Part of the 50S ribosomal subunit. Forms a bridge to the 30S subunit in the 70S ribosome.

Its function is as follows. One of the primary rRNA binding proteins. Required for association of the 30S and 50S subunits to form the 70S ribosome, for tRNA binding and peptide bond formation. It has been suggested to have peptidyltransferase activity; this is somewhat controversial. Makes several contacts with the 16S rRNA in the 70S ribosome. The chain is Large ribosomal subunit protein uL2 from Legionella pneumophila (strain Lens).